Here is a 283-residue protein sequence, read N- to C-terminus: 4-diphosphocytidyl-2-C-methyl-D-erythritol kinase (283 aa).

K10 is a catalytic residue. 99–109 contributes to the ATP binding site; that stretch reads PMGGGLGGGSS. D141 is an active-site residue.

It belongs to the GHMP kinase family. IspE subfamily. As to quaternary structure, homodimer.

It carries out the reaction 4-CDP-2-C-methyl-D-erythritol + ATP = 4-CDP-2-C-methyl-D-erythritol 2-phosphate + ADP + H(+). Its pathway is isoprenoid biosynthesis; isopentenyl diphosphate biosynthesis via DXP pathway; isopentenyl diphosphate from 1-deoxy-D-xylulose 5-phosphate: step 3/6. Its function is as follows. Catalyzes the phosphorylation of the position 2 hydroxy group of 4-diphosphocytidyl-2C-methyl-D-erythritol. This chain is 4-diphosphocytidyl-2-C-methyl-D-erythritol kinase, found in Salmonella typhi.